Here is a 176-residue protein sequence, read N- to C-terminus: 3-hydroxyanthranilate 3,4-dioxygenase (176 aa).

R44 serves as a coordination point for O2. Fe cation is bound by residues H48, E54, and H92. E54 is a binding site for substrate. 2 residues coordinate substrate: R96 and E106. Residues C121, C124, C158, and C161 each coordinate Fe cation.

This sequence belongs to the 3-HAO family. As to quaternary structure, homodimer. Fe(2+) serves as cofactor.

The enzyme catalyses 3-hydroxyanthranilate + O2 = (2Z,4Z)-2-amino-3-carboxymuconate 6-semialdehyde. The protein operates within cofactor biosynthesis; NAD(+) biosynthesis; quinolinate from L-kynurenine: step 3/3. Functionally, catalyzes the oxidative ring opening of 3-hydroxyanthranilate to 2-amino-3-carboxymuconate semialdehyde, which spontaneously cyclizes to quinolinate. The protein is 3-hydroxyanthranilate 3,4-dioxygenase of Xanthomonas campestris pv. campestris (strain 8004).